Consider the following 149-residue polypeptide: Large ribosomal subunit protein bL9 (149 aa).

The protein belongs to the bacterial ribosomal protein bL9 family.

Binds to the 23S rRNA. The sequence is that of Large ribosomal subunit protein bL9 from Klebsiella pneumoniae subsp. pneumoniae (strain ATCC 700721 / MGH 78578).